Reading from the N-terminus, the 167-residue chain is UPF0598 protein CG30010 (167 aa).

This sequence belongs to the UPF0598 family.

This is UPF0598 protein CG30010 from Drosophila melanogaster (Fruit fly).